The primary structure comprises 116 residues: Protein Wnt-5b (116 aa).

A lipid anchor (O-palmitoleoyl serine; by PORCN) is attached at serine 1. Asparagine 69 and asparagine 83 each carry an N-linked (GlcNAc...) asparagine glycan. A disulfide bridge connects residues cysteine 82 and cysteine 97.

Belongs to the Wnt family. In terms of processing, palmitoleoylation is required for efficient binding to frizzled receptors. Depalmitoleoylation leads to Wnt signaling pathway inhibition.

The protein localises to the secreted. Its subcellular location is the extracellular space. It is found in the extracellular matrix. Functionally, ligand for members of the frizzled family of seven transmembrane receptors. Probable developmental protein. May be a signaling molecule which affects the development of discrete regions of tissues. Is likely to signal over only few cell diameters. This chain is Protein Wnt-5b (WNT-5B), found in Plethodon jordani (Red-cheeked salamander).